A 425-amino-acid polypeptide reads, in one-letter code: Serine--tRNA ligase (425 aa).

L-serine is bound at residue 229-231 (TAE). 260–262 (RSE) contributes to the ATP binding site. Glu-283 is an L-serine binding site. 347–350 (EISS) lines the ATP pocket. Ser-384 serves as a coordination point for L-serine.

It belongs to the class-II aminoacyl-tRNA synthetase family. Type-1 seryl-tRNA synthetase subfamily. As to quaternary structure, homodimer. The tRNA molecule binds across the dimer.

It localises to the cytoplasm. It catalyses the reaction tRNA(Ser) + L-serine + ATP = L-seryl-tRNA(Ser) + AMP + diphosphate + H(+). The catalysed reaction is tRNA(Sec) + L-serine + ATP = L-seryl-tRNA(Sec) + AMP + diphosphate + H(+). The protein operates within aminoacyl-tRNA biosynthesis; selenocysteinyl-tRNA(Sec) biosynthesis; L-seryl-tRNA(Sec) from L-serine and tRNA(Sec): step 1/1. Functionally, catalyzes the attachment of serine to tRNA(Ser). Is also able to aminoacylate tRNA(Sec) with serine, to form the misacylated tRNA L-seryl-tRNA(Sec), which will be further converted into selenocysteinyl-tRNA(Sec). This chain is Serine--tRNA ligase, found in Rhizorhabdus wittichii (strain DSM 6014 / CCUG 31198 / JCM 15750 / NBRC 105917 / EY 4224 / RW1) (Sphingomonas wittichii).